A 754-amino-acid chain; its full sequence is Endothelin-converting enzyme 1 (754 aa).

Residues 1–52 (MMSTYKRATLDEEDLVDSLSEGEVYPNGLQVNFRNFRSSQRCWATRTQVEKR) are Cytoplasmic-facing. The residue at position 9 (threonine 9) is a Phosphothreonine. Residues 53–73 (LIVLVALLAAGLVACLTALGI) traverse the membrane as a helical; Signal-anchor for type II membrane protein segment. Residues 74-754 (QYRTRTPPVC…MNPRHKCEVW (681 aa)) lie on the Extracellular side of the membrane. Residues 82-754 (VCLSEACVSV…MNPRHKCEVW (673 aa)) form the Peptidase M13 domain. 5 cysteine pairs are disulfide-bonded: cysteine 83-cysteine 88, cysteine 106-cysteine 739, cysteine 114-cysteine 699, cysteine 169-cysteine 419, and cysteine 628-cysteine 751. Asparagine 150, asparagine 171, asparagine 194, asparagine 254, asparagine 300, asparagine 346, asparagine 367, and asparagine 523 each carry an N-linked (GlcNAc...) asparagine glycan. A Zn(2+)-binding site is contributed by histidine 591. The active site involves glutamate 592. Histidine 595 provides a ligand contact to Zn(2+). N-linked (GlcNAc...) asparagine glycosylation is found at asparagine 616 and asparagine 635. A Zn(2+)-binding site is contributed by glutamate 651. Residue aspartate 655 is the Proton donor of the active site.

This sequence belongs to the peptidase M13 family. Homodimer; disulfide-linked. Interacts with PPP1R16B. Interacts with TSPAN8; this interaction recruits the endothelin converting enzyme ECE1 to tetraspanin-enriched microdomains and positively modulates its enzymatic activity. It depends on Zn(2+) as a cofactor.

The protein resides in the cell membrane. The enzyme catalyses Hydrolysis of the 21-Trp-|-Val-22 bond in big endothelin to form endothelin 1.. Its activity is regulated as follows. Inhibited by phosphoramidon. Converts big endothelin-1 to endothelin-1. In Cavia porcellus (Guinea pig), this protein is Endothelin-converting enzyme 1 (ECE1).